The primary structure comprises 252 residues: Major prion protein (252 aa).

A signal peptide spans 1-22 (MANLGCWMLVLFVATWSDLGLC). Residues 23–38 (KKRPKPGGWNTGGSRY) are interaction with ADGRG6. The interval 23-229 (KKRPKPGGWN…ESQAYYQRGS (207 aa)) is interaction with GRB2, ERI3 and SYN1. A disordered region spans residues 26–106 (PKPGGWNTGG…QWNKPSKPKT (81 aa)). 5 repeat units span residues 51-58 (PQGGGWGQ), 59-66 (PHGGGWGQ), 67-74 (PHGGGWGQ), 75-82 (PHGGSWGQ), and 83-90 (PHGGGWGQ). Positions 51-90 (PQGGGWGQPHGGGWGQPHGGGWGQPHGGSWGQPHGGGWGQ) are 5 X 8 AA tandem repeats of P-H-G-G-G-W-G-Q. Gly residues predominate over residues 52 to 94 (QGGGWGQPHGGGWGQPHGGGWGQPHGGSWGQPHGGGWGQGGGT). The Cu(2+) site is built by histidine 60, glycine 61, glycine 62, histidine 68, glycine 69, glycine 70, histidine 76, glycine 77, glycine 78, histidine 84, glycine 85, and glycine 86. An intrachain disulfide couples cysteine 178 to cysteine 213. Asparagine 180 and asparagine 196 each carry an N-linked (GlcNAc...) asparagine glycan. A lipid anchor (GPI-anchor amidated serine) is attached at serine 229. The propeptide at 230–252 (SMVLFSSPPVILLISFLIFLIVG) is removed in mature form.

Belongs to the prion family. As to quaternary structure, monomer and homodimer. Has a tendency to aggregate into amyloid fibrils containing a cross-beta spine, formed by a steric zipper of superposed beta-strands. Soluble oligomers may represent an intermediate stage on the path to fibril formation. Copper binding may promote oligomerization. Interacts with GRB2, APP, ERI3/PRNPIP and SYN1. Mislocalized cytosolically exposed PrP interacts with MGRN1; this interaction alters MGRN1 subcellular location and causes lysosomal enlargement. Interacts with APP. Interacts with KIAA1191. Interacts with ADGRG6.

The protein localises to the cell membrane. It is found in the golgi apparatus. Functionally, its primary physiological function is unclear. May play a role in neuronal development and synaptic plasticity. May be required for neuronal myelin sheath maintenance. May promote myelin homeostasis through acting as an agonist for ADGRG6 receptor. May play a role in iron uptake and iron homeostasis. Soluble oligomers are toxic to cultured neuroblastoma cells and induce apoptosis (in vitro). Association with GPC1 (via its heparan sulfate chains) targets PRNP to lipid rafts. Also provides Cu(2+) or Zn(2+) for the ascorbate-mediated GPC1 deaminase degradation of its heparan sulfate side chains. The chain is Major prion protein (PRNP) from Sapajus apella (Brown-capped capuchin).